The following is a 92-amino-acid chain: MSRARAHVVVSGKVQGVYFRSETRDQALALGVTGWIRNRTDGTVEGVFEGDREMVEKLVRWCWQGPPAAEVSNVQVEWQDYTGEFSGFKIAF.

The Acylphosphatase-like domain maps to 5–92 (RAHVVVSGKV…GEFSGFKIAF (88 aa)). Active-site residues include arginine 20 and asparagine 38.

Belongs to the acylphosphatase family.

It carries out the reaction an acyl phosphate + H2O = a carboxylate + phosphate + H(+). The chain is Acylphosphatase (acyP) from Pelotomaculum thermopropionicum (strain DSM 13744 / JCM 10971 / SI).